The primary structure comprises 92 residues: Acylphosphatase (92 aa).

The 88-residue stretch at 5 to 92 folds into the Acylphosphatase-like domain; the sequence is RAHVFISGRV…GKEGIFTIVW (88 aa). Catalysis depends on residues Arg20 and Asn38.

This sequence belongs to the acylphosphatase family.

It carries out the reaction an acyl phosphate + H2O = a carboxylate + phosphate + H(+). This Chloroflexus aurantiacus (strain ATCC 29366 / DSM 635 / J-10-fl) protein is Acylphosphatase (acyP).